A 347-amino-acid chain; its full sequence is Quinolinate synthase (347 aa).

Residues histidine 47 and serine 68 each contribute to the iminosuccinate site. Cysteine 113 contacts [4Fe-4S] cluster. Residues tyrosine 139–asparagine 141 and serine 156 each bind iminosuccinate. [4Fe-4S] cluster is bound at residue cysteine 200. Iminosuccinate is bound by residues histidine 226–glutamate 228 and threonine 243. Cysteine 297 contacts [4Fe-4S] cluster.

It belongs to the quinolinate synthase family. Type 1 subfamily. [4Fe-4S] cluster serves as cofactor.

It localises to the cytoplasm. It carries out the reaction iminosuccinate + dihydroxyacetone phosphate = quinolinate + phosphate + 2 H2O + H(+). It participates in cofactor biosynthesis; NAD(+) biosynthesis; quinolinate from iminoaspartate: step 1/1. Catalyzes the condensation of iminoaspartate with dihydroxyacetone phosphate to form quinolinate. The protein is Quinolinate synthase of Salmonella typhi.